A 167-amino-acid chain; its full sequence is Phosphopantetheine adenylyltransferase (167 aa).

Residue serine 11 participates in substrate binding. ATP-binding positions include 11–12 (SF) and histidine 19. Substrate is bound by residues lysine 43, threonine 76, and arginine 90. Residues 91–93 (GIR), glutamate 101, and 126–132 (YDALSST) each bind ATP.

It belongs to the bacterial CoaD family. As to quaternary structure, homohexamer. Mg(2+) is required as a cofactor.

It is found in the cytoplasm. It carries out the reaction (R)-4'-phosphopantetheine + ATP + H(+) = 3'-dephospho-CoA + diphosphate. Its pathway is cofactor biosynthesis; coenzyme A biosynthesis; CoA from (R)-pantothenate: step 4/5. Functionally, reversibly transfers an adenylyl group from ATP to 4'-phosphopantetheine, yielding dephospho-CoA (dPCoA) and pyrophosphate. The protein is Phosphopantetheine adenylyltransferase of Lacticaseibacillus casei (strain BL23) (Lactobacillus casei).